We begin with the raw amino-acid sequence, 371 residues long: DNA replication and repair protein RecF (371 aa).

30–37 (GQNGMGKT) lines the ATP pocket.

This sequence belongs to the RecF family.

It localises to the cytoplasm. Its function is as follows. The RecF protein is involved in DNA metabolism; it is required for DNA replication and normal SOS inducibility. RecF binds preferentially to single-stranded, linear DNA. It also seems to bind ATP. The polypeptide is DNA replication and repair protein RecF (Phocaeicola vulgatus (strain ATCC 8482 / DSM 1447 / JCM 5826 / CCUG 4940 / NBRC 14291 / NCTC 11154) (Bacteroides vulgatus)).